We begin with the raw amino-acid sequence, 221 residues long: MVHYVKMEDGKVMPIQDMLKSIERYNPEHLKVIEAYVEEQARDNQYDLEANLACLKLYQFNPQLMNLDVTYVILLKALTNFPHTDFVLCKCLLLPAQMNDDTVKEIIYLADILEKCDFTLFWSRVAKNPPFFKKISGFFDSIRKFVCHVVGITFQSIEKQYLVRLLGDVDDNVLRAWVKKNNWKEDGQYITVAVQEGNIKTKHITEKIDFENLAPLMANCL.

Positions 46 to 207 (YDLEANLACL…NIKTKHITEK (162 aa)) constitute a PCI domain.

It belongs to the eIF-3 subunit K family. In terms of assembly, component of the eukaryotic translation initiation factor 3 (eIF-3) complex.

It localises to the cytoplasm. Component of the eukaryotic translation initiation factor 3 (eIF-3) complex, which is involved in protein synthesis of a specialized repertoire of mRNAs and, together with other initiation factors, stimulates binding of mRNA and methionyl-tRNAi to the 40S ribosome. The eIF-3 complex specifically targets and initiates translation of a subset of mRNAs involved in cell proliferation. This is Eukaryotic translation initiation factor 3 subunit K from Aedes aegypti (Yellowfever mosquito).